Reading from the N-terminus, the 68-residue chain is ATP synthase F(0) complex subunit 8 (68 aa).

The helical transmembrane segment at 8–24 threads the bilayer; the sequence is TWFTIIMAMLPTLYLIT. Residue lysine 54 is modified to N6-acetyllysine; alternate. An N6-succinyllysine; alternate modification is found at lysine 54. The residue at position 57 (lysine 57) is an N6-acetyllysine.

The protein belongs to the ATPase protein 8 family. In terms of assembly, component of the ATP synthase complex composed at least of ATP5F1A/subunit alpha, ATP5F1B/subunit beta, ATP5MC1/subunit c (homooctomer), MT-ATP6/subunit a, MT-ATP8/subunit 8, ATP5ME/subunit e, ATP5MF/subunit f, ATP5MG/subunit g, ATP5MK/subunit k, ATP5MJ/subunit j, ATP5F1C/subunit gamma, ATP5F1D/subunit delta, ATP5F1E/subunit epsilon, ATP5PF/subunit F6, ATP5PB/subunit b, ATP5PD/subunit d, ATP5PO/subunit OSCP. ATP synthase complex consists of a soluble F(1) head domain (subunits alpha(3) and beta(3)) - the catalytic core - and a membrane F(0) domain - the membrane proton channel (subunits c, a, 8, e, f, g, k and j). These two domains are linked by a central stalk (subunits gamma, delta, and epsilon) rotating inside the F1 region and a stationary peripheral stalk (subunits F6, b, d, and OSCP). Interacts with PRICKLE3.

It localises to the mitochondrion membrane. In terms of biological role, subunit 8, of the mitochondrial membrane ATP synthase complex (F(1)F(0) ATP synthase or Complex V) that produces ATP from ADP in the presence of a proton gradient across the membrane which is generated by electron transport complexes of the respiratory chain. ATP synthase complex consist of a soluble F(1) head domain - the catalytic core - and a membrane F(1) domain - the membrane proton channel. These two domains are linked by a central stalk rotating inside the F(1) region and a stationary peripheral stalk. During catalysis, ATP synthesis in the catalytic domain of F(1) is coupled via a rotary mechanism of the central stalk subunits to proton translocation. In vivo, can only synthesize ATP although its ATP hydrolase activity can be activated artificially in vitro. Part of the complex F(0) domain. The sequence is that of ATP synthase F(0) complex subunit 8 from Papio hamadryas (Hamadryas baboon).